A 457-amino-acid polypeptide reads, in one-letter code: Adenylosuccinate synthetase isozyme 1 (457 aa).

Positions 1–25 (MSGTRASNDRPPSAGGVKRGRLQHE) are disordered. GTP is bound by residues 42-48 (GDEGKGK) and 70-72 (GHT). The active-site Proton acceptor is Asp43. Mg(2+) is bound by residues Asp43 and Gly70. Asp43 contributes to the substrate binding site. Residues 43-46 (DEGK), 68-71 (NAGH), Thr163, Arg177, Asn256, Thr271, and Arg335 contribute to the IMP site. Catalysis depends on His71, which acts as the Proton donor. Residue 331–337 (VTTGRKR) participates in substrate binding. GTP is bound by residues Arg337, 363 to 365 (KLD), and 445 to 448 (GVGK).

Belongs to the adenylosuccinate synthetase family. As to quaternary structure, homodimer. It depends on Mg(2+) as a cofactor. As to expression, predominantly expressed in the striated muscle tissues.

The protein localises to the cytoplasm. The catalysed reaction is IMP + L-aspartate + GTP = N(6)-(1,2-dicarboxyethyl)-AMP + GDP + phosphate + 2 H(+). It functions in the pathway purine metabolism; AMP biosynthesis via de novo pathway; AMP from IMP: step 1/2. In terms of biological role, component of the purine nucleotide cycle (PNC), which interconverts IMP and AMP to regulate the nucleotide levels in various tissues, and which contributes to glycolysis and ammoniagenesis. Catalyzes the first committed step in the biosynthesis of AMP from IMP. The protein is Adenylosuccinate synthetase isozyme 1 of Sus scrofa (Pig).